A 426-amino-acid chain; its full sequence is C2H2 type master regulator of conidiophore development brlA (426 aa).

Disordered stretches follow at residues 25-71 (CPSM…DRGT) and 281-302 (GVRL…KQSL). Positions 30–44 (SSFSPLESPTPTPTS) are enriched in low complexity. Over residues 45–58 (IYSQGSLASPSWPE) the composition is skewed to polar residues. Positions 288–297 (PSRKMARKQP) are enriched in basic residues. 2 consecutive C2H2-type zinc fingers follow at residues 316 to 340 (FKCK…MKSH) and 346 to 371 (HVCW…TKTH). The interval 384–426 (LDETSPDYNPDYRGPLTADGRPMPGGTLDESMPSREISMEWDE) is disordered.

Its subcellular location is the nucleus. Functionally, brlA, abaA and wetA are pivotal regulators of conidiophore development and conidium maturation. They act individually and together to regulate their own expression and that of numerous other sporulation-specific genes. Binds promoters of target genes at brlA response elements (BREs) containing the conserved sequence 5'-(C/A)(A/G)AGGG(G/A)-3'. Positively regulates expression of the gliotoxin biosynthetic gene cluster in actively growing vegetative cells, and likely bridges morphological and chemical development during the life-cycle. Regulates (directly or indirectly) the ergot cluster genes. Positively regulates expression of the fumiquinazoline C biosynthetic gene cluster. Positively regulates expression of the melanin biosynthetic gene cluster. Mediates repression of ribosomal protein gene expression in response to nitrogen depletion. This chain is C2H2 type master regulator of conidiophore development brlA, found in Aspergillus fumigatus (strain ATCC MYA-4609 / CBS 101355 / FGSC A1100 / Af293) (Neosartorya fumigata).